A 381-amino-acid chain; its full sequence is Alcohol dehydrogenase class-3 (381 aa).

Zn(2+) is bound at residue Cys49. Residue His50 participates in NAD(+) binding. An alcohol contacts are provided by Thr51 and His71. Zn(2+) is bound by residues His71, Glu72, Cys101, Cys104, Cys107, Cys115, and Cys179. NAD(+)-binding positions include 204–209 (GLGTVG), Asp228, Lys233, Ile274, 297–299 (VGV), 322–324 (TAF), and Arg374.

It belongs to the zinc-containing alcohol dehydrogenase family. Class-III subfamily. Homodimer. It depends on Zn(2+) as a cofactor.

It localises to the cytoplasm. It carries out the reaction a primary alcohol + NAD(+) = an aldehyde + NADH + H(+). The enzyme catalyses a secondary alcohol + NAD(+) = a ketone + NADH + H(+). The catalysed reaction is S-(hydroxymethyl)glutathione + NADP(+) = S-formylglutathione + NADPH + H(+). It catalyses the reaction S-(hydroxymethyl)glutathione + NAD(+) = S-formylglutathione + NADH + H(+). In Oryza sativa subsp. japonica (Rice), this protein is Alcohol dehydrogenase class-3.